The following is a 158-amino-acid chain: MKKQGFPPVIDENTEILILGSLPGDVSIRKHQYYGHPGNDFWRLLGSIIGEDLQSINYQNRLEALKRNKIGLWDVFKAGKREGNEDTKIKDEEINQFSILKDMAPNLKLVLFNGKKSGEYEPILRAMGYETKILLSSSGANRRSLKSRKSGWAEAFKR.

Residue Asn39 is part of the active site.

It belongs to the uracil-DNA glycosylase (UDG) superfamily. Type 6 (HDG) family.

In terms of biological role, excises hypoxanthine, a deamination product of adenine, from double-stranded DNA. Acts on double-stranded DNA containing G/I, T/I, A/I and C/I base pairs, but not on single-stranded inosine-containing DNA. Also has minor xanthine DNA glycosylase activity. Lacks any detectable uracil-DNA glycosylase activity. The chain is Hypoxanthine DNA glycosylase from Methanosarcina barkeri (strain Fusaro / DSM 804).